We begin with the raw amino-acid sequence, 299 residues long: 11-beta-hydroxysteroid dehydrogenase-like 4A (299 aa).

Residues 10–30 traverse the membrane as a helical; Signal-anchor for type II membrane protein segment; the sequence is ILLPIVTVSFLLVFMPFSIFF. Residues 54–80 and Asp-105 each bind NADP(+); that span reads GSSSGIGEHLAYEYARRGAYLTLVARR. Position 184 (Ser-184) interacts with substrate. Residue Tyr-197 is the Proton acceptor of the active site. Residues 197-201 and Lys-201 each bind NADP(+); that span reads YAASK.

The protein belongs to the short-chain dehydrogenases/reductases (SDR) family.

The protein resides in the membrane. This is 11-beta-hydroxysteroid dehydrogenase-like 4A (HSD4) from Arabidopsis thaliana (Mouse-ear cress).